Here is a 138-residue protein sequence, read N- to C-terminus: Small ribosomal subunit protein bS6 (138 aa).

Residues 97–121 (TEQSEMLKAEENRSERRERRDRPDN) show a composition bias toward basic and acidic residues. The disordered stretch occupies residues 97 to 138 (TEQSEMLKAEENRSERRERRDRPDNTDGSNENDSDSDNNADE). Residues 126-138 (NENDSDSDNNADE) show a composition bias toward acidic residues.

The protein belongs to the bacterial ribosomal protein bS6 family.

Functionally, binds together with bS18 to 16S ribosomal RNA. This is Small ribosomal subunit protein bS6 from Stutzerimonas stutzeri (strain A1501) (Pseudomonas stutzeri).